The primary structure comprises 117 residues: Small ribosomal subunit protein bS6m (117 aa).

The protein belongs to the bacterial ribosomal protein bS6 family. As to quaternary structure, component of the mitochondrial small ribosomal subunit (mt-SSU). Mature N.crassa 74S mitochondrial ribosomes consist of a small (37S) and a large (54S) subunit. The 37S small subunit contains a 16S ribosomal RNA (16S mt-rRNA) and 32 different proteins. The 54S large subunit contains a 23S rRNA (23S mt-rRNA) and 42 different proteins.

It is found in the mitochondrion. Component of the mitochondrial ribosome (mitoribosome), a dedicated translation machinery responsible for the synthesis of mitochondrial genome-encoded proteins, including at least some of the essential transmembrane subunits of the mitochondrial respiratory chain. The mitoribosomes are attached to the mitochondrial inner membrane and translation products are cotranslationally integrated into the membrane. The polypeptide is Small ribosomal subunit protein bS6m (mrp17) (Neurospora crassa (strain ATCC 24698 / 74-OR23-1A / CBS 708.71 / DSM 1257 / FGSC 987)).